A 432-amino-acid chain; its full sequence is MPLQYQSGFGNDWATEALPGALPAGRNSPQRCPYGLYAEQLSGTAFTAPRAENRRSWLYRIRPAAQHRPFEPFDGAARWLSDFGAAPVTPNQLRWSPLPLPDAPTDFIEGVQTWGGNGGPGEHGGVGIHLYAANRSMQGRYFYNADGELLIVPQQGRLRLATELGIIEVEPLEIAVIPRGVRLRVDLPDGQARGYMLENFGAALHLPELGPIGSNCLANARDFQTPVACYEDIEGDFELIAKFTGGFWRAAIGHSPLDVVAWHGTHAPYKYDLRHFNTIGSISFDHPDPSIFTVLTSPSDTPGTANMDFAIFPPRVLAMENTFRPPWFHRNVASEFMGLIHGVYDAKAEGFAPGGASLHNCMSGHGPDADTFEKATAADTSQAHYIRDTMAFMFETRRVIRPTAQALASAQLQSDYYECWQGLNKHFDPAQP.

H286 (proton acceptor) is an active-site residue. The Fe cation site is built by H329 and E335. Homogentisate-binding residues include Y344 and H365. Residue H365 participates in Fe cation binding.

It belongs to the homogentisate dioxygenase family. Hexamer; dimer of trimers. The cofactor is Fe cation.

It carries out the reaction homogentisate + O2 = 4-maleylacetoacetate + H(+). It participates in amino-acid degradation; L-phenylalanine degradation; acetoacetate and fumarate from L-phenylalanine: step 4/6. Involved in the catabolism of homogentisate (2,5-dihydroxyphenylacetate or 2,5-OH-PhAc), a central intermediate in the degradation of phenylalanine and tyrosine. Catalyzes the oxidative ring cleavage of the aromatic ring of homogentisate to yield maleylacetoacetate. This chain is Homogentisate 1,2-dioxygenase, found in Bordetella petrii (strain ATCC BAA-461 / DSM 12804 / CCUG 43448).